We begin with the raw amino-acid sequence, 467 residues long: 6-phospho-beta-galactosidase (467 aa).

D-galactose 6-phosphate is bound by residues Q19, H116, N159, E160, and N297. Residue E160 is the Proton donor of the active site. The active-site Nucleophile is E375. D-galactose 6-phosphate-binding residues include S428, W429, K435, and Y437.

This sequence belongs to the glycosyl hydrolase 1 family.

It carries out the reaction a 6-phospho-beta-D-galactoside + H2O = D-galactose 6-phosphate + an alcohol. The protein operates within carbohydrate metabolism; lactose degradation; D-galactose 6-phosphate and beta-D-glucose from lactose 6-phosphate: step 1/1. Its activity is regulated as follows. Inhibited by both galactose-6-phosphate and ATP. This Leptotrichia buccalis (strain ATCC 14201 / DSM 1135 / JCM 12969 / NCTC 10249 / C-1013-b) protein is 6-phospho-beta-galactosidase.